Reading from the N-terminus, the 265-residue chain is 4-hydroxy-tetrahydrodipicolinate reductase (265 aa).

Residues 7–12 (GASGRM) and aspartate 33 each bind NAD(+). Residue arginine 34 coordinates NADP(+). Residues 96–98 (GTT) and 120–123 (AANM) contribute to the NAD(+) site. Histidine 153 acts as the Proton donor/acceptor in catalysis. Histidine 154 contributes to the (S)-2,3,4,5-tetrahydrodipicolinate binding site. Residue lysine 157 is the Proton donor of the active site. 163 to 164 (GT) is a binding site for (S)-2,3,4,5-tetrahydrodipicolinate.

This sequence belongs to the DapB family.

The protein localises to the cytoplasm. The catalysed reaction is (S)-2,3,4,5-tetrahydrodipicolinate + NAD(+) + H2O = (2S,4S)-4-hydroxy-2,3,4,5-tetrahydrodipicolinate + NADH + H(+). It carries out the reaction (S)-2,3,4,5-tetrahydrodipicolinate + NADP(+) + H2O = (2S,4S)-4-hydroxy-2,3,4,5-tetrahydrodipicolinate + NADPH + H(+). Its pathway is amino-acid biosynthesis; L-lysine biosynthesis via DAP pathway; (S)-tetrahydrodipicolinate from L-aspartate: step 4/4. Its function is as follows. Catalyzes the conversion of 4-hydroxy-tetrahydrodipicolinate (HTPA) to tetrahydrodipicolinate. The chain is 4-hydroxy-tetrahydrodipicolinate reductase from Burkholderia orbicola (strain MC0-3).